The sequence spans 166 residues: Spiderine-1b (166 aa).

The first 18 residues, 1-18 (MKFALVLLGICAFYLVNA), serve as a signal peptide directing secretion. The propeptide at 19–58 (TGDLETELEASELQELQEALDLIGETSLESLEAEELEEAR) is removed in mature form. Positions 59-99 (KFKWGKLFSAAKKLYKKGKKLSKNKNFKKALKFGKQLAKNL) are linear cationic cytotoxin domain. An Oxytoxin-type inhibitor cystine knot (ICK) domain is found at 113–166 (NNKCWAIGTTCSDDCDCCPEHHCHCPAGKWLPGLFRCTCQVTESDKVNKCPPAE). Cystine bridges form between Cys116/Cys130, Cys123/Cys135, Cys127/Cys162, Cys129/Cys151, and Cys137/Cys149.

The protein belongs to the spiderine family. Cationic/spiderine subfamily. As to expression, expressed by the venom gland.

Its subcellular location is the secreted. Its function is as follows. Has antimicrobial, insecticidal, cytolytic and cytotoxic activity. This Oxyopes takobius (Lynx spider) protein is Spiderine-1b.